A 570-amino-acid chain; its full sequence is Interleukin-1 receptor accessory protein (570 aa).

The N-terminal stretch at 1-20 (MGLPWCLMSLFFCGILQSHA) is a signal peptide. Ig-like C2-type domains lie at 21–128 (SERC…VAFP), 141–230 (PMRL…RTMT), and 243–348 (PHIY…AKVK). Residues 21–367 (SERCDDWGLD…VELACGFGAT (347 aa)) are Extracellular-facing. 5 disulfide bridges follow: Cys24–Cys122, Cys47–Cys114, Cys137–Cys181, Cys160–Cys212, and Cys266–Cys332. Asn57 carries N-linked (GlcNAc...) asparagine glycosylation. An essential for interaction with PTPRD region spans residues 69-85 (IWYWTRQDRDLEEPINF). 6 N-linked (GlcNAc...) asparagine glycosylation sites follow: Asn107, Asn111, Asn118, Asn157, Asn196, and Asn209. Residues 368–388 (VFLVVVLIVVYHVYWLEMVLF) traverse the membrane as a helical segment. The Cytoplasmic segment spans residues 389–570 (YRAHFGTDET…GLSYSSLKNV (182 aa)). Residues 403–546 (KEYDIYVSYA…RFWKQLQVAM (144 aa)) form the TIR domain. Glu482 is a catalytic residue. The disordered stretch occupies residues 550-570 (KSPRWSSSDKQGLSYSSLKNV). Residues 553–570 (RWSSSDKQGLSYSSLKNV) show a composition bias toward polar residues. Ser557 carries the phosphoserine modification.

Belongs to the interleukin-1 receptor family. As to quaternary structure, the interleukin-36 receptor complex is a heterodimer of IL1RL2 and IL1RAP; the association is inhibited by IL36RN. The interleukin-1 receptor complex is a heterodimer of IL1R1 and IL1RAP. Associates with IL1R2 to form a non-signaling interleukin-1 receptor complex. Interacts with IL-33-bound IL1RL1 to form the minimal interleukin-33 signaling complex with a 1:1:1 stoichiometry. Interacts with KIT (independently of stimulation with KITLG/SCF). A mast cell-specific KITLG/SCF-induced interleukin-33 signaling complex contains IL1RL1, IL1RAP, KIT and MYD88. Interacts (via the first immunoglobilin domain) with PTPRD (via the third immunoglobilin domain); induces pre- and postsynaptic differentiation of neurons. Highly expressed in hypothalamus, in the dentate gyrus of hippocampus, cerebral cortex, cerebellum, liver and lung.

It is found in the membrane. The catalysed reaction is NAD(+) + H2O = ADP-D-ribose + nicotinamide + H(+). Functionally, coreceptor for IL1RL2 in the IL-36 signaling system. Coreceptor with IL1R1 in the IL-1 signaling system. Associates with IL1R1 bound to IL1B to form the high affinity interleukin-1 receptor complex which mediates interleukin-1-dependent activation of NF-kappa-B and other pathways. Signaling involves the recruitment of adapter molecules such as TOLLIP, MYD88, and IRAK1 or IRAK2 via the respective TIR domains of the receptor/coreceptor subunits. Recruits TOLLIP to the signaling complex. Does not bind to interleukin-1 alone; binding of IL1RN to IL1R1, prevents its association with IL1R1 to form a signaling complex. The cellular response is modulated through a non-signaling association with the membrane IL1R2 decoy receptor. Coreceptor for IL1RL1 in the IL-33 signaling system. Can bidirectionally induce pre- and postsynaptic differentiation of neurons by trans-synaptically binding to PTPRD. May play a role in IL1B-mediated costimulation of IFNG production from T-helper 1 (Th1) cells. The protein is Interleukin-1 receptor accessory protein (Il1rap) of Rattus norvegicus (Rat).